A 539-amino-acid chain; its full sequence is uncharacterized protein (539 aa).

The segment at 316–433 is disordered; it reads AEHHHQKGKK…ATVERSSPPE (118 aa). Basic residues predominate over residues 318–352; the sequence is HHHQKGKKVPATHRRSSTPHARKTAGTRARTRARK. The span at 362-384 shows a compositional bias: basic and acidic residues; it reads KISKKDSGESKQKDETAGMERVF. Residues 390–402 show a composition bias toward polar residues; sequence NVRTCSSRASRTG.

This is an uncharacterized protein from Treponema pallidum (strain Nichols).